Here is a 490-residue protein sequence, read N- to C-terminus: ATP synthase subunit beta, chloroplastic (490 aa).

Threonine 6 is modified (phosphothreonine). Serine 13 carries the post-translational modification Phosphoserine. ATP is bound at residue 172 to 179 (GGAGVGKT).

Belongs to the ATPase alpha/beta chains family. In terms of assembly, F-type ATPases have 2 components, CF(1) - the catalytic core - and CF(0) - the membrane proton channel. CF(1) has five subunits: alpha(3), beta(3), gamma(1), delta(1), epsilon(1). CF(0) has four main subunits: a(1), b(1), b'(1) and c(9-12).

It is found in the plastid. Its subcellular location is the chloroplast thylakoid membrane. It catalyses the reaction ATP + H2O + 4 H(+)(in) = ADP + phosphate + 5 H(+)(out). Its function is as follows. Produces ATP from ADP in the presence of a proton gradient across the membrane. The catalytic sites are hosted primarily by the beta subunits. The polypeptide is ATP synthase subunit beta, chloroplastic (Aethionema grandiflorum (Persian stone-cress)).